A 230-amino-acid chain; its full sequence is Porin OmpL (230 aa).

The first 20 residues, 1–20 (MKSLNTLVILTSVISTSVFA), serve as a signal peptide directing secretion.

Belongs to the oligogalacturonate-specific porin KdgM (TC 1.B.35) family. OmpL subfamily.

It is found in the cell outer membrane. Its function is as follows. Outer membrane channel protein that allows an efficient diffusion of low-molecular-weight solutes such as small sugars and tetraglycine. However, the specific substrate recognized by the OmpL channel is unknown. In Salmonella typhimurium (strain LT2 / SGSC1412 / ATCC 700720), this protein is Porin OmpL (ompL).